A 98-amino-acid polypeptide reads, in one-letter code: NADH-ubiquinone oxidoreductase chain 4L (98 aa).

Helical transmembrane passes span 29–49 (SLLCLEGMMLSMFILSTLLIL) and 61–81 (ILLLVFAACEAAIGLALLVTV).

The protein belongs to the complex I subunit 4L family. As to quaternary structure, core subunit of respiratory chain NADH dehydrogenase (Complex I) which is composed of 45 different subunits.

The protein resides in the mitochondrion inner membrane. The catalysed reaction is a ubiquinone + NADH + 5 H(+)(in) = a ubiquinol + NAD(+) + 4 H(+)(out). Core subunit of the mitochondrial membrane respiratory chain NADH dehydrogenase (Complex I) which catalyzes electron transfer from NADH through the respiratory chain, using ubiquinone as an electron acceptor. Part of the enzyme membrane arm which is embedded in the lipid bilayer and involved in proton translocation. The chain is NADH-ubiquinone oxidoreductase chain 4L (MT-ND4L) from Cheirogaleus medius (Fat-tailed dwarf lemur).